Reading from the N-terminus, the 101-residue chain is MMSLLTPAVLLTQRSHTLTLSVSTPLGLVMTTYESSTLKDARLKLVSQKEVNGKLHLTLGAGRLLYIIRIFLATGTTQFLTMVLPSTASVDSLPGTYLRRC.

The protein belongs to the orthobunyavirus NS-S protein family.

In terms of biological role, inhibits host transcriptional machinery, by producing modifications to the phosphorylation state of the C-terminal domain (CTD) of RNA polymerase II. Inhibits phosphorylation at serine 2 in the heptapeptide repeat (YSPTSPS) of the CTD of RNA polymerase II, suggesting that the elongation step of transcription and/or 3'-end processing is prevented. Inhibition of host transcription machinery leads to shut off of host cell protein synthesis and inhibition of the host innate immune response. NSs also seems to be involved in the nuclear relocalization of host PABP1. This Bunyamwera virus (BUNV) protein is Non-structural protein NS-S (N).